The chain runs to 151 residues: Ribosome maturation factor RimP (151 aa).

This sequence belongs to the RimP family.

The protein resides in the cytoplasm. Its function is as follows. Required for maturation of 30S ribosomal subunits. The sequence is that of Ribosome maturation factor RimP from Crocosphaera subtropica (strain ATCC 51142 / BH68) (Cyanothece sp. (strain ATCC 51142)).